Consider the following 289-residue polypeptide: Complement C1q tumor necrosis factor-related protein 7 (289 aa).

The first 16 residues, 1 to 16, serve as a signal peptide directing secretion; sequence MIVLLYVTSLAICASG. Residues 36-134 are disordered; the sequence is IPGLPGPPGP…GDRGDQGDPG (99 aa). The region spanning 38-139 is the Collagen-like domain; the sequence is GLPGPPGPPG…QGDPGLPGVC (102 aa). Over residues 48 to 61 the composition is skewed to low complexity; the sequence is ANGSPGPHGRIGLP. Residues 63-76 are compositionally biased toward basic and acidic residues; that stretch reads RDGRDGRKGEKGEK. Residues 78-91 show a composition bias toward low complexity; that stretch reads TAGLKGKTGPLGLA. Residues 93-102 show a composition bias toward basic and acidic residues; sequence EKGDQGETGK. The region spanning 143-279 is the C1q domain; that stretch reads SIVLKSAFSV…GFLLYVDTDY (137 aa).

The protein resides in the secreted. The chain is Complement C1q tumor necrosis factor-related protein 7 (C1qtnf7) from Mus musculus (Mouse).